We begin with the raw amino-acid sequence, 103 residues long: Large ribosomal subunit protein bL21 (103 aa).

This sequence belongs to the bacterial ribosomal protein bL21 family. In terms of assembly, part of the 50S ribosomal subunit. Contacts protein L20.

In terms of biological role, this protein binds to 23S rRNA in the presence of protein L20. The protein is Large ribosomal subunit protein bL21 of Chloroflexus aurantiacus (strain ATCC 29364 / DSM 637 / Y-400-fl).